The sequence spans 109 residues: Elongation factor G, chloroplastic (109 aa).

It belongs to the GTP-binding elongation factor family. EF-G/EF-2 subfamily.

It is found in the plastid. It localises to the chloroplast. It functions in the pathway protein biosynthesis; polypeptide chain elongation. Functionally, chloroplast-localized elongation factor EF-G involved in protein synthesis in plastids. Catalyzes the GTP-dependent ribosomal translocation step during translation elongation. During this step, the ribosome changes from the pre-translocational (PRE) to the post-translocational (POST) state as the newly formed A-site-bound peptidyl-tRNA and P-site-bound deacylated tRNA move to the P and E sites, respectively. Catalyzes the coordinated movement of the two tRNA molecules, the mRNA and conformational changes in the ribosome. The protein is Elongation factor G, chloroplastic of Arachis hypogaea (Peanut).